The sequence spans 155 residues: Protein SprT-like (155 aa).

The SprT-like domain maps to Q7–T145. H67 is a binding site for Zn(2+). Residue E68 is part of the active site. H71 is a binding site for Zn(2+).

The protein belongs to the SprT family. Requires Zn(2+) as cofactor.

Its subcellular location is the cytoplasm. This is Protein SprT-like from Listeria innocua serovar 6a (strain ATCC BAA-680 / CLIP 11262).